The chain runs to 127 residues: Small ribosomal subunit protein uS11 (127 aa).

The protein belongs to the universal ribosomal protein uS11 family. In terms of assembly, part of the 30S ribosomal subunit.

Its function is as follows. Located on the platform of the 30S subunit. In Halobacterium salinarum (strain ATCC 700922 / JCM 11081 / NRC-1) (Halobacterium halobium), this protein is Small ribosomal subunit protein uS11.